The chain runs to 771 residues: UPF0313 protein PSPTO_4928 (771 aa).

Residues 371 to 649 (AYDMIRFSVN…KAFLRYHDPK (279 aa)) enclose the Radical SAM core domain. 3 residues coordinate [4Fe-4S] cluster: C385, C389, and C392. Positions 683 to 771 (DTYQSARRKN…KPARKPVVPR (89 aa)) are disordered. Basic and acidic residues-rich tracts occupy residues 726-735 (KPWDKREEAK) and 745-754 (AAKERMDAAK). The span at 756–765 (GKGKGGKPAR) shows a compositional bias: basic residues.

Belongs to the UPF0313 family. Requires [4Fe-4S] cluster as cofactor.

The polypeptide is UPF0313 protein PSPTO_4928 (Pseudomonas syringae pv. tomato (strain ATCC BAA-871 / DC3000)).